A 211-amino-acid chain; its full sequence is NADH-quinone oxidoreductase subunit I (211 aa).

4Fe-4S ferredoxin-type domains lie at 90 to 119 (RLWESDTERCIGCGLCEKICISNCIRIDTK) and 129 to 158 (TEYSINLGRCIFCGYCAEVCPELAITHGGE). Positions 99, 102, 105, 109, 138, 141, 144, and 148 each coordinate [4Fe-4S] cluster.

This sequence belongs to the complex I 23 kDa subunit family. As to quaternary structure, NDH-1 is composed of 14 different subunits. Subunits NuoA, H, J, K, L, M, N constitute the membrane sector of the complex. The cofactor is [4Fe-4S] cluster.

It localises to the cell inner membrane. The catalysed reaction is a quinone + NADH + 5 H(+)(in) = a quinol + NAD(+) + 4 H(+)(out). NDH-1 shuttles electrons from NADH, via FMN and iron-sulfur (Fe-S) centers, to quinones in the respiratory chain. The immediate electron acceptor for the enzyme in this species is believed to be ubiquinone. Couples the redox reaction to proton translocation (for every two electrons transferred, four hydrogen ions are translocated across the cytoplasmic membrane), and thus conserves the redox energy in a proton gradient. The protein is NADH-quinone oxidoreductase subunit I of Sulfurimonas denitrificans (strain ATCC 33889 / DSM 1251) (Thiomicrospira denitrificans (strain ATCC 33889 / DSM 1251)).